Reading from the N-terminus, the 466-residue chain is MSITSVASVFKGEFAIGSQVTVRGWVRSRRDSKAGISFLAVYDGSCFDPIQGVVPNSLENYNDEILKLTAGCSVVMTGEVVDSPGKGQAFELQVSSVEVAGWVEDPDTYPMAAKRHSIEHLRELAHLRPRTNIIGAVARVRNSLSQAIHRFYHEQGFIWVSTPLITASDAEGAGEMFRVSTLDMENLPRNDEGKVDYSEDFFGKESFLTVSGQLNAETYASALSKVYTFGPTFRAENSNTSRHLAEFWMVEPEVAFADLDDVAGLAEQMLKFCFKAVLEERRDDLEFFAQRVDKTVIDRLESFVSSDFAQVDYTDAVEILKSCGKKFEYPVEWGIDLQSEHERYLAEEHFKAPVVVKNYPKDIKAFYMRLNDDGKTVAAMDVLAPGIGEIIGGAQREERLDVLDARLEEMNLSKEDYWWYRDMRRYGTVPHSGFGLGFERLVSYVTGVSNIRDVIPFPRAPKSASF.

It belongs to the class-II aminoacyl-tRNA synthetase family. As to quaternary structure, homodimer.

The protein localises to the cytoplasm. The enzyme catalyses tRNA(Asn) + L-asparagine + ATP = L-asparaginyl-tRNA(Asn) + AMP + diphosphate + H(+). This chain is Asparagine--tRNA ligase, found in Shewanella sediminis (strain HAW-EB3).